The primary structure comprises 372 residues: N-methyl-L-tryptophan oxidase (372 aa).

4–34 provides a ligand contact to FAD; sequence DLIIIGSGSVGAAAGYYATRAGLKVLMTDAH. S-8alpha-FAD cysteine is present on cysteine 307.

The protein belongs to the MSOX/MTOX family. MTOX subfamily. Monomer. The cofactor is FAD.

The enzyme catalyses N(alpha)-methyl-L-tryptophan + O2 + H2O = L-tryptophan + formaldehyde + H2O2. Catalyzes the oxidative demethylation of N-methyl-L-tryptophan. In Salmonella heidelberg (strain SL476), this protein is N-methyl-L-tryptophan oxidase.